We begin with the raw amino-acid sequence, 346 residues long: UDP-3-O-acylglucosamine N-acyltransferase (346 aa).

Histidine 240 serves as the catalytic Proton acceptor.

This sequence belongs to the transferase hexapeptide repeat family. LpxD subfamily. Homotrimer.

The enzyme catalyses a UDP-3-O-[(3R)-3-hydroxyacyl]-alpha-D-glucosamine + a (3R)-hydroxyacyl-[ACP] = a UDP-2-N,3-O-bis[(3R)-3-hydroxyacyl]-alpha-D-glucosamine + holo-[ACP] + H(+). The protein operates within bacterial outer membrane biogenesis; LPS lipid A biosynthesis. Catalyzes the N-acylation of UDP-3-O-acylglucosamine using 3-hydroxyacyl-ACP as the acyl donor. Is involved in the biosynthesis of lipid A, a phosphorylated glycolipid that anchors the lipopolysaccharide to the outer membrane of the cell. The polypeptide is UDP-3-O-acylglucosamine N-acyltransferase (Bacteroides thetaiotaomicron (strain ATCC 29148 / DSM 2079 / JCM 5827 / CCUG 10774 / NCTC 10582 / VPI-5482 / E50)).